The chain runs to 201 residues: Protein tirC (201 aa).

The region spanning 52 to 186 is the TIR domain; the sequence is ERIKVFIVHG…YVWINYTEDL (135 aa).

The polypeptide is Protein tirC (tirC) (Dictyostelium discoideum (Social amoeba)).